A 318-amino-acid chain; its full sequence is Ferrochelatase (318 aa).

Residues H186 and E264 each contribute to the Fe cation site.

Belongs to the ferrochelatase family.

Its subcellular location is the cytoplasm. It carries out the reaction heme b + 2 H(+) = protoporphyrin IX + Fe(2+). It participates in porphyrin-containing compound metabolism; protoheme biosynthesis; protoheme from protoporphyrin-IX: step 1/1. Functionally, catalyzes the ferrous insertion into protoporphyrin IX. This is Ferrochelatase from Chlamydia abortus (strain DSM 27085 / S26/3) (Chlamydophila abortus).